The chain runs to 381 residues: Chaperone protein DnaJ (381 aa).

The region spanning 5–70 (DFYEVLGVSR…QKKAAYDQYG (66 aa)) is the J domain. The CR-type zinc finger occupies 136–214 (GVTKEIEVPT…CHGQGRKQKT (79 aa)). Cys149, Cys152, Cys166, Cys169, Cys188, Cys191, Cys202, and Cys205 together coordinate Zn(2+). CXXCXGXG motif repeat units lie at residues 149–156 (CDSCDGSG), 166–173 (CGTCHGHG), 188–195 (CPTCHGKG), and 202–209 (CNECHGQG).

This sequence belongs to the DnaJ family. Homodimer. Zn(2+) serves as cofactor.

It localises to the cytoplasm. Functionally, participates actively in the response to hyperosmotic and heat shock by preventing the aggregation of stress-denatured proteins and by disaggregating proteins, also in an autonomous, DnaK-independent fashion. Unfolded proteins bind initially to DnaJ; upon interaction with the DnaJ-bound protein, DnaK hydrolyzes its bound ATP, resulting in the formation of a stable complex. GrpE releases ADP from DnaK; ATP binding to DnaK triggers the release of the substrate protein, thus completing the reaction cycle. Several rounds of ATP-dependent interactions between DnaJ, DnaK and GrpE are required for fully efficient folding. Also involved, together with DnaK and GrpE, in the DNA replication of plasmids through activation of initiation proteins. The protein is Chaperone protein DnaJ of Vibrio parahaemolyticus serotype O3:K6 (strain RIMD 2210633).